The sequence spans 338 residues: Phenylalanine--tRNA ligase alpha subunit (338 aa).

Mg(2+) is bound at residue Glu252.

This sequence belongs to the class-II aminoacyl-tRNA synthetase family. Phe-tRNA synthetase alpha subunit type 1 subfamily. As to quaternary structure, tetramer of two alpha and two beta subunits. Mg(2+) is required as a cofactor.

The protein localises to the cytoplasm. The catalysed reaction is tRNA(Phe) + L-phenylalanine + ATP = L-phenylalanyl-tRNA(Phe) + AMP + diphosphate + H(+). The chain is Phenylalanine--tRNA ligase alpha subunit from Ectopseudomonas mendocina (strain ymp) (Pseudomonas mendocina).